The following is a 554-amino-acid chain: Rab GTPase-binding effector protein 2 (554 aa).

A compositionally biased stretch (low complexity) spans 1–15 (MAAAPAALALDPQPQ). Disordered regions lie at residues 1-29 (MAAAPAALALDPQPQEEQKDASESSELSR), 167-250 (IQRR…ETAS), and 375-395 (EQLPSSALQGSEQQEDQDEAL). Residues 15 to 173 (QEEQKDASES…IQEIQRRPRQ (159 aa)) are a coiled coil. Basic and acidic residues predominate over residues 16–29 (EEQKDASESSELSR). Phosphoserine occurs at positions 176, 180, 187, and 191. Positions 274–512 (DSQWEQLQVE…LETSEQVQRD (239 aa)) form a coiled coil. The span at 377 to 386 (LPSSALQGSE) shows a compositional bias: polar residues.

This sequence belongs to the rabaptin family. As to quaternary structure, heterodimer with RABGEF1. The dimer binds RAB5A that has been activated by GTP-binding. Interacts with SDCCAG8; this interaction is important for ciliogenesis regulation. Interacts with RAB4A; this interaction may mediate VEGFR2 cell surface expression.

The protein resides in the cytoplasm. It is found in the early endosome. The protein localises to the cytoskeleton. Its subcellular location is the microtubule organizing center. It localises to the centrosome. The protein resides in the cilium basal body. In terms of biological role, plays a role in membrane trafficking and in homotypic early endosome fusion. Participates in arteriogenesis by regulating vascular endothelial growth factor receptor 2/VEGFR2 cell surface expression and endosomal trafficking. By interacting with SDCCAG8, localizes to centrosomes and plays a critical role in ciliogenesis. The sequence is that of Rab GTPase-binding effector protein 2 (Rabep2) from Rattus norvegicus (Rat).